We begin with the raw amino-acid sequence, 265 residues long: Hydroxyethylthiazole kinase 2 (265 aa).

M39 lines the substrate pocket. The ATP site is built by K115 and T168. Position 195 (G195) interacts with substrate.

The protein belongs to the Thz kinase family. Mg(2+) is required as a cofactor.

It catalyses the reaction 5-(2-hydroxyethyl)-4-methylthiazole + ATP = 4-methyl-5-(2-phosphooxyethyl)-thiazole + ADP + H(+). Its pathway is cofactor biosynthesis; thiamine diphosphate biosynthesis; 4-methyl-5-(2-phosphoethyl)-thiazole from 5-(2-hydroxyethyl)-4-methylthiazole: step 1/1. In terms of biological role, catalyzes the phosphorylation of the hydroxyl group of 4-methyl-5-beta-hydroxyethylthiazole (THZ). The protein is Hydroxyethylthiazole kinase 2 of Clostridium botulinum (strain ATCC 19397 / Type A).